An 812-amino-acid polypeptide reads, in one-letter code: Mitochondrial intermediate peptidase (812 aa).

The transit peptide at 1-29 (MRLSRQLLRSTPFLTRAKPVSGKVSHFRS) directs the protein to the mitochondrion. The segment at 19 to 49 (PVSGKVSHFRSRTDLKGGSSNSSKSPDSVGD) is disordered. Over residues 37–46 (SSNSSKSPDS) the composition is skewed to low complexity. His-595 is a binding site for Zn(2+). Glu-596 is an active-site residue. 2 residues coordinate Zn(2+): His-599 and His-602.

The protein belongs to the peptidase M3 family. Zn(2+) serves as cofactor.

It localises to the mitochondrion matrix. It catalyses the reaction Release of an N-terminal octapeptide as second stage of processing of some proteins imported into the mitochondrion.. In terms of biological role, cleaves proteins, imported into the mitochondrion, to their mature size. While most mitochondrial precursor proteins are processed to the mature form in one step by mitochondrial processing peptidase (MPP), the sequential cleavage by MIP of an octapeptide after initial processing by MPP is a required step for a subgroup of nuclear-encoded precursor proteins destined for the matrix or the inner membrane. The chain is Mitochondrial intermediate peptidase (OCT1) from Scheffersomyces stipitis (strain ATCC 58785 / CBS 6054 / NBRC 10063 / NRRL Y-11545) (Yeast).